The sequence spans 159 residues: C-type lectin BJcuL (159 aa).

A signal peptide spans 1 to 24; it reads MGRFLFVASSACWFVFLSLSGAKG. Disulfide bonds link cysteine 27–cysteine 38, cysteine 55–cysteine 155, cysteine 62–cysteine 157, and cysteine 130–cysteine 147. A C-type lectin domain is found at 34–156; the sequence is MNGLCYKIFN…CESKNAFLCQ (123 aa). Positions 120, 122, 128, 143, and 144 each coordinate Ca(2+). Residues 120–122 carry the Galactose-binding motif; it reads QPD.

This sequence belongs to the true venom lectin family. Homodecamer of disulfide-linked dimers arranged in two 5-fold symmetric pentamers. Binds the gentamicin group of aminoglycoside antibiotics at the dimeric interface near the intermolecular disulfide bond. As to expression, expressed by the venom gland.

It localises to the secreted. With respect to regulation, hemagglutination activity is inhibited by lactose (MIC=2.5 mM), galactose (MIC=10 mM), and raffinose. Is very weakly or not inhibited by gentamicin, kanamycin, glucose and sucrose. Galactose-binding lectin which recognizes specific carbohydrate structures and agglutinates a variety of animal cells by binding to cell-surface glycoproteins and glycolipids. Calcium-dependent lectin. Also binds lactose and raffinose. Shows high hemagglutinating activity on mammalian erythrocytes. It also involved in immunological functions, since it is able of inducing potent neutrophil activation. In vivo, it causes edema and increases vascular permeability after injection into mouse hind paws (10-100 ug/paw). In anesthetized rats, it decreases the blood pressure by approximately 15%, with a rapid return to the resting level. Is an effective inhibitor of cell growth in some cancer cell lines, especially against renal and pancreatic cancer cell lines, human breast and ovarian carcinoma, glioblastoma and a bovine brain microvascular endothelial cell line. The sequence is that of C-type lectin BJcuL from Bothrops jararacussu (Jararacussu).